Consider the following 373-residue polypeptide: Probable G-protein coupled receptor 173 (373 aa).

Over 1-26 the chain is Extracellular; it reads MANTTGEPEEVSGALSPPSASAYVKL. N-linked (GlcNAc...) asparagine glycosylation is present at Asn3. A helical transmembrane segment spans residues 27–47; that stretch reads VLLGLIMCVSLAGNAILSLLV. The Cytoplasmic portion of the chain corresponds to 48–59; sequence LKERALHKAPYY. A helical transmembrane segment spans residues 60 to 80; that stretch reads FLLDLCLADGIRSAVCFPFVL. Residues 81-97 are Extracellular-facing; that stretch reads ASVRHGSSWTFSALSCK. A disulfide bond links Cys96 and Cys174. Residues 98–118 traverse the membrane as a helical segment; the sequence is IVAFMAVLFCFHAAFMLFCIS. The Cytoplasmic segment spans residues 119 to 139; that stretch reads VTRYMAIAHHRFYAKRMTLWT. A helical transmembrane segment spans residues 140–160; it reads CAAVICMAWTLSVAMAFPPVF. Over 161–188 the chain is Extracellular; it reads DVGTYKFIREEDQCIFEHRYFKANDTLG. N-linked (GlcNAc...) asparagine glycosylation occurs at Asn184. Residues 189–209 form a helical membrane-spanning segment; the sequence is FMLMLAVLMAATHAVYGKLLL. Topologically, residues 210–287 are cytoplasmic; it reads FEYRHRKMKP…VKGEKQLGRM (78 aa). A helical membrane pass occupies residues 288–308; that stretch reads FYAITLLFLLLWSPYIVACYW. Over 309-322 the chain is Extracellular; sequence RVFVKACAVPHRYL. A helical membrane pass occupies residues 323–343; the sequence is ATAVWMSFAQAAVNPIVCFLL. Over 344–373 the chain is Cytoplasmic; the sequence is NKDLKKCLRTHAPCWGTGGAPAPREPYCVM.

It belongs to the G-protein coupled receptor 1 family. Expressed in the ovary, specifically in granulosa cells of follicles that have passed the primary stage and in oocytes (at protein level). Expressed at high levels in brain. Lower levels in small intestine. In brain regions, detected in all regions tested. Highest levels in the cerebellum and cerebral cortex.

The protein resides in the cell membrane. In terms of biological role, is a receptor for the SMIM20 derived peptides Phoenixin-14 and Phoenixin-20. It mediates the Phoenixin-14 and Phoenixin-20 augmentation of gonadotropin-releasing hormone (GNRH) signaling in the hypothalamus and pituitary gland. In the ovary, it mediates the effects of Phoenixin-14 and Phoenixin-20 induced granulosa cell proliferation during follicular growth. The chain is Probable G-protein coupled receptor 173 (GPR173) from Homo sapiens (Human).